A 106-amino-acid chain; its full sequence is Putative double-stranded DNA mimic protein VV1_3059 (106 aa).

It belongs to the putative dsDNA mimic protein family.

Its function is as follows. May act as a double-stranded DNA (dsDNA) mimic. Probably regulates the activity of a dsDNA-binding protein. The chain is Putative double-stranded DNA mimic protein VV1_3059 from Vibrio vulnificus (strain CMCP6).